Here is a 407-residue protein sequence, read N- to C-terminus: GTPase Obg (407 aa).

In terms of domain architecture, Obg spans 1-159 (MKFVDEVSIR…RDLKLELKVL (159 aa)). The disordered stretch occupies residues 127-149 (NTRFKSSTNRAPRQTTPGKPGDQ). Polar residues predominate over residues 129–143 (RFKSSTNRAPRQTTP). Positions 160-333 (ADVGLLGLPN…LTRDIMRYLE (174 aa)) constitute an OBG-type G domain. Residues 166–173 (GLPNAGKS), 191–195 (FTTLV), 213–216 (DIPG), 283–286 (NKCD), and 314–316 (SAI) contribute to the GTP site. Mg(2+)-binding residues include serine 173 and threonine 193. Residues 376 to 407 (SGVKSVHDIGDDDWDEEDVDDEDGPEIIYVRD) are disordered. A compositionally biased stretch (acidic residues) spans 385–400 (GDDDWDEEDVDDEDGP).

The protein belongs to the TRAFAC class OBG-HflX-like GTPase superfamily. OBG GTPase family. Monomer. Mg(2+) serves as cofactor.

It is found in the cytoplasm. In terms of biological role, an essential GTPase which binds GTP, GDP and possibly (p)ppGpp with moderate affinity, with high nucleotide exchange rates and a fairly low GTP hydrolysis rate. Plays a role in control of the cell cycle, stress response, ribosome biogenesis and in those bacteria that undergo differentiation, in morphogenesis control. The sequence is that of GTPase Obg from Pseudomonas savastanoi pv. phaseolicola (strain 1448A / Race 6) (Pseudomonas syringae pv. phaseolicola (strain 1448A / Race 6)).